Reading from the N-terminus, the 476-residue chain is Probable cytosol aminopeptidase (476 aa).

Mn(2+) contacts are provided by Lys-242 and Asp-247. Lys-254 is a catalytic residue. Residues Asp-265, Asp-324, and Glu-326 each contribute to the Mn(2+) site. Arg-328 is a catalytic residue.

This sequence belongs to the peptidase M17 family. The cofactor is Mn(2+).

It localises to the cytoplasm. The catalysed reaction is Release of an N-terminal amino acid, Xaa-|-Yaa-, in which Xaa is preferably Leu, but may be other amino acids including Pro although not Arg or Lys, and Yaa may be Pro. Amino acid amides and methyl esters are also readily hydrolyzed, but rates on arylamides are exceedingly low.. It carries out the reaction Release of an N-terminal amino acid, preferentially leucine, but not glutamic or aspartic acids.. Its function is as follows. Presumably involved in the processing and regular turnover of intracellular proteins. Catalyzes the removal of unsubstituted N-terminal amino acids from various peptides. The protein is Probable cytosol aminopeptidase of Treponema denticola (strain ATCC 35405 / DSM 14222 / CIP 103919 / JCM 8153 / KCTC 15104).